Reading from the N-terminus, the 184-residue chain is GMP synthase [glutamine-hydrolyzing] subunit A (184 aa).

The Glutamine amidotransferase type-1 domain maps to 3–184 (PICVVNNYGQ…YENFDAICTE (182 aa)). The active-site Nucleophile is the Cys-75. Residues His-162 and Glu-164 contribute to the active site.

Heterodimer composed of a glutamine amidotransferase subunit (A) and a GMP-binding subunit (B).

The catalysed reaction is XMP + L-glutamine + ATP + H2O = GMP + L-glutamate + AMP + diphosphate + 2 H(+). It functions in the pathway purine metabolism; GMP biosynthesis; GMP from XMP (L-Gln route): step 1/1. Its function is as follows. Catalyzes the synthesis of GMP from XMP. The chain is GMP synthase [glutamine-hydrolyzing] subunit A from Methanoregula boonei (strain DSM 21154 / JCM 14090 / 6A8).